The sequence spans 265 residues: Hemin import ATP-binding protein HmuV (265 aa).

The region spanning 10–247 (LVARHLRFQT…ETLAHWYRAD (238 aa)) is the ABC transporter domain. 42 to 49 (GPNGAGKS) provides a ligand contact to ATP.

It belongs to the ABC transporter superfamily. Heme (hemin) importer (TC 3.A.1.14.5) family. The complex is composed of two ATP-binding proteins (HmuV), two transmembrane proteins (HmuU) and a solute-binding protein (HmuT).

The protein resides in the cell inner membrane. Its function is as follows. Part of the ABC transporter complex HmuTUV involved in hemin import. Responsible for energy coupling to the transport system. This is Hemin import ATP-binding protein HmuV from Pectobacterium atrosepticum (strain SCRI 1043 / ATCC BAA-672) (Erwinia carotovora subsp. atroseptica).